The chain runs to 240 residues: tRNA (guanine-N(1)-)-methyltransferase (240 aa).

S-adenosyl-L-methionine contacts are provided by residues Gly111 and 130–135; that span reads IGDYVI.

It belongs to the RNA methyltransferase TrmD family. Homodimer.

The protein localises to the cytoplasm. It catalyses the reaction guanosine(37) in tRNA + S-adenosyl-L-methionine = N(1)-methylguanosine(37) in tRNA + S-adenosyl-L-homocysteine + H(+). Its function is as follows. Specifically methylates guanosine-37 in various tRNAs. This is tRNA (guanine-N(1)-)-methyltransferase from Mycoplasma capricolum subsp. capricolum (strain California kid / ATCC 27343 / NCTC 10154).